A 278-amino-acid polypeptide reads, in one-letter code: Ras-related protein Rab-40B (278 aa).

3 residues coordinate GTP: serine 23, glycine 26, and lysine 27. The interval 41-49 (SPYGHPAGI) is switch-I. Residue aspartate 69 coordinates Mg(2+). Glycine 72, asparagine 126, and arginine 127 together coordinate GTP. The segment at 72–88 (GQGRFCTIFRSYSRGAQ) is switch-II. An SOCS box domain is found at 175-228 (LLRHGMDRLWRPSKVLSLQDLCCRAVVSCTPVHLVDKLPLPIALRSHLKSFSMA). Residues 242–278 (SLTTSSTHKRSSLRKVKLVRPPQSPPKNCTRNSCKIS) form a disordered region. Basic residues predominate over residues 248–259 (THKRSSLRKVKL). The segment covering 267 to 278 (PKNCTRNSCKIS) has biased composition (polar residues). A lipid anchor (S-palmitoyl cysteine) is attached at cysteine 270. Cysteine 275 carries S-geranylgeranyl cysteine lipidation.

The protein belongs to the small GTPase superfamily. Rab family. Component of the cullin-5-RING E3 ubiquitin-protein ligase complex (ECS(RAB40B) complex) composed of CUL5, Elongin BC (ELOB and ELOC), RNF7/RBX2 and RAB40B; RAB40B interaction with ECS complex is GTP-independent. Binds (GTP-bound) LIMA1; interaction promotes LIMA1 subcellular localization in lamellipodia during cell migration. Interacts (GTP-bound) with TKS5/SH3PXD2A (via PX domain); interaction promotes invadopodia-mediated extracellular matrix degradation. Mg(2+) is required as a cofactor.

The protein resides in the cell membrane. It is found in the cytoplasm. It localises to the cytosol. Its subcellular location is the cell projection. The protein localises to the lamellipodium membrane. The protein resides in the ruffle. The catalysed reaction is GTP + H2O = GDP + phosphate + H(+). The protein operates within protein modification; protein ubiquitination. Regulated by guanine nucleotide exchange factors (GEFs) which promote the exchange of bound GDP for free GTP. Regulated by GTPase activating proteins (GAPs) which increase the GTP hydrolysis activity. Inhibited by GDP dissociation inhibitors (GDIs). Functionally, RAB40B small GTPase acts as substrate-recognition components of the ECS(RAB40B) E3 ubiquitin ligase complex which mediates the ubiquitination of target proteins. The Rab40 subfamily belongs to the Rab family that are key regulators of intracellular membrane trafficking, from the formation of transport vesicles to their fusion with membranes. Rabs cycle between an inactive GDP-bound form and an active GTP-bound form that is able to recruit to membranes different sets of downstream effectors directly responsible for vesicle formation, movement, tethering and fusion. As part of the ECS(RAB40B) complex, GTP-bound RAB40B promotes LIMA1/EPLIN ubiquitination and degradation, thereby regulating leading-edge actin dynamics during cell migration. As part of the ECS(RAB40B) complex, GTP-bound RAB40B also ubiquitinates RAP2A GTPase which promotes its localization to lamellipodia and activation to drive cell migration. The ECS(RAB40B) complex does not mediate canonical ubiquitin-dependent degradation of RAP2. RAB40B also binds TKS5/SH3PXD2A effector independently from ECS complex to promote invadopodia-mediated extracellular matrix degradation. In Homo sapiens (Human), this protein is Ras-related protein Rab-40B.